A 209-amino-acid polypeptide reads, in one-letter code: NAD-reducing hydrogenase HoxS subunit delta (209 aa).

In terms of assembly, tetramer of an alpha and a gamma subunits (flavin-containing dimer), and a delta and a nickel-containing beta subunits (hydrogenase dimer). The cofactor is [4Fe-4S] cluster. [3Fe-4S] cluster serves as cofactor. [2Fe-2S] cluster is required as a cofactor. Requires FMN as cofactor. It depends on Ni(2+) as a cofactor.

The protein localises to the cytoplasm. It carries out the reaction H2 + NAD(+) = NADH + H(+). The chain is NAD-reducing hydrogenase HoxS subunit delta (hoxY) from Cupriavidus necator (strain ATCC 17699 / DSM 428 / KCTC 22496 / NCIMB 10442 / H16 / Stanier 337) (Ralstonia eutropha).